The chain runs to 347 residues: S-adenosylmethionine:tRNA ribosyltransferase-isomerase (347 aa).

Belongs to the QueA family. In terms of assembly, monomer.

The protein resides in the cytoplasm. The catalysed reaction is 7-aminomethyl-7-carbaguanosine(34) in tRNA + S-adenosyl-L-methionine = epoxyqueuosine(34) in tRNA + adenine + L-methionine + 2 H(+). Its pathway is tRNA modification; tRNA-queuosine biosynthesis. In terms of biological role, transfers and isomerizes the ribose moiety from AdoMet to the 7-aminomethyl group of 7-deazaguanine (preQ1-tRNA) to give epoxyqueuosine (oQ-tRNA). In Bordetella parapertussis (strain 12822 / ATCC BAA-587 / NCTC 13253), this protein is S-adenosylmethionine:tRNA ribosyltransferase-isomerase.